The following is a 394-amino-acid chain: MAPKKQNGFMMFVNEWRNRNAEGRRMTLAEAVYHCGTIWEKMDTQQRGPYNSDAKDANAARRDKRGSLNGHGQVDKAQREAAESLMDKAQREAAESLMDMKRTTERLVLNAKMSHDLENAKFVFVAFNYFTKALTTDVYVPAEFAACEYSLKEGIRSIYSTMIDPGQIIFGQGSDALHNSSTTHDLPLPPNALGEKNMVKLYRNILDYLTKCQGEGKTPIVFTPAENIGMVKSCFRYLECEDDSRDGGGKIEVFDIQYLLFILKKEVMSVAGLNDEKINKFATDAFFKNDFFEFTAGIACQISSINTRDYHVATLIGLLPAQTINVYLGSTLRSMHEVLSDNDTKLTGYISFLFEVICGVALMFWVLQKARKELSETLLSADYNNEGKHPDVQV.

Positions 2–69 form a DNA-binding region, HMG box; the sequence is APKKQNGFMM…ARRDKRGSLN (68 aa). The tract at residues 44–93 is disordered; the sequence is TQQRGPYNSDAKDANAARRDKRGSLNGHGQVDKAQREAAESLMDKAQREA. The segment covering 73 to 93 has biased composition (basic and acidic residues); it reads QVDKAQREAAESLMDKAQREA.

This sequence belongs to the maelstrom family.

The protein localises to the cytoplasm. Its subcellular location is the nucleus. Its function is as follows. Involved both in the piRNA and miRNA metabolic processes. As a component of the meiotic nuage, plays a central role during oogenesis by repressing transposable elements and preventing their mobilization, which is essential for the germline integrity. Repression of transposable elements is mediated via the piRNA metabolic process, which mediates the repression of transposable elements during meiosis by forming complexes composed of piRNAs and Piwi proteins and governs the repression of transposons. As a nuclear component, it is required for proper differentiation in the germline stem cell (GSC) lineage by repressing microRNA-7 (miR-7), thereby acting as an indirect regulator of bag-of-marbles (Bam). Acts by binding to the promoter of miR-7 gene and repressing its expression; miR-7 repression alleviates the Bam repression by miR-7, thereby allowing differentiation in the germline stem cell (GSC) lineage. The protein is Protein maelstrom (mael) of Drosophila simulans (Fruit fly).